Here is a 254-residue protein sequence, read N- to C-terminus: 4-hydroxy-tetrahydrodipicolinate reductase (254 aa).

G8–M13 serves as a coordination point for NAD(+). K36 lines the NADP(+) pocket. Residues G89–T91 and S115–Y118 contribute to the NAD(+) site. H147 acts as the Proton donor/acceptor in catalysis. H148 provides a ligand contact to (S)-2,3,4,5-tetrahydrodipicolinate. The active-site Proton donor is K151. Residue G157–T158 coordinates (S)-2,3,4,5-tetrahydrodipicolinate.

Belongs to the DapB family.

It localises to the cytoplasm. It carries out the reaction (S)-2,3,4,5-tetrahydrodipicolinate + NAD(+) + H2O = (2S,4S)-4-hydroxy-2,3,4,5-tetrahydrodipicolinate + NADH + H(+). It catalyses the reaction (S)-2,3,4,5-tetrahydrodipicolinate + NADP(+) + H2O = (2S,4S)-4-hydroxy-2,3,4,5-tetrahydrodipicolinate + NADPH + H(+). Its pathway is amino-acid biosynthesis; L-lysine biosynthesis via DAP pathway; (S)-tetrahydrodipicolinate from L-aspartate: step 4/4. Its function is as follows. Catalyzes the conversion of 4-hydroxy-tetrahydrodipicolinate (HTPA) to tetrahydrodipicolinate. This chain is 4-hydroxy-tetrahydrodipicolinate reductase, found in Methanospirillum hungatei JF-1 (strain ATCC 27890 / DSM 864 / NBRC 100397 / JF-1).